Reading from the N-terminus, the 160-residue chain is Serine-protein kinase RsbW (160 aa).

This sequence belongs to the anti-sigma-factor family.

The enzyme catalyses L-seryl-[protein] + ATP = O-phospho-L-seryl-[protein] + ADP + H(+). It carries out the reaction L-threonyl-[protein] + ATP = O-phospho-L-threonyl-[protein] + ADP + H(+). Functionally, negative regulator of sigma-B activity. Phosphorylates and inactivates its specific antagonist protein, RsbV. Upon phosphorylation of RsbV, RsbW is released and binds to sigma-B, thereby blocking its ability to form an RNA polymerase holoenzyme (E-sigma-B). This Bacillus anthracis (strain A0248) protein is Serine-protein kinase RsbW.